The following is a 306-amino-acid chain: Abnormal cell migration protein 21 (306 aa).

2 TSP type-1 domains span residues 55–102 and 109–155; these read PGGW…AISS and FGSW…DECP. Tryptophan 58 and tryptophan 61 each carry a C-linked (Man) tryptophan glycan. 3 disulfide bridges follow: cysteine 121–cysteine 149, cysteine 123–cysteine 154, and cysteine 134–cysteine 139. Residues 240–260 form a helical membrane-spanning segment; that stretch reads CLPLHFAIPIFCFCILTGFLL.

Glycosylated via C-mannosylation by dpy-19 at Trp-58 and Trp-61.

The protein resides in the membrane. Its function is as follows. Required for determination of left/right asymmetry in nervous system. Acts together with unc-40 to control an initial left-right asymmetric polarization of the Q neuroblasts. Mig-21 and unc-40 may control the asymmetry in Wnt signaling response by restricting posterior polarization to one of the 2 Q neuroblasts. Involved in left-side QL posterior migration. In right-side QR, unc-40 and mig-21 pathways mutually inhibit each other in posterior migration, allowing anterior QR migration. The sequence is that of Abnormal cell migration protein 21 (mig-21) from Caenorhabditis elegans.